The primary structure comprises 186 residues: ATP synthase subunit delta (186 aa).

Belongs to the ATPase delta chain family. In terms of assembly, F-type ATPases have 2 components, F(1) - the catalytic core - and F(0) - the membrane proton channel. F(1) has five subunits: alpha(3), beta(3), gamma(1), delta(1), epsilon(1). CF(0) has four main subunits: a(1), b(1), b'(1) and c(10-14). The alpha and beta chains form an alternating ring which encloses part of the gamma chain. F(1) is attached to F(0) by a central stalk formed by the gamma and epsilon chains, while a peripheral stalk is formed by the delta, b and b' chains.

The protein resides in the cell inner membrane. Its function is as follows. F(1)F(0) ATP synthase produces ATP from ADP in the presence of a proton or sodium gradient. F-type ATPases consist of two structural domains, F(1) containing the extramembraneous catalytic core and F(0) containing the membrane proton channel, linked together by a central stalk and a peripheral stalk. During catalysis, ATP synthesis in the catalytic domain of F(1) is coupled via a rotary mechanism of the central stalk subunits to proton translocation. This protein is part of the stalk that links CF(0) to CF(1). It either transmits conformational changes from CF(0) to CF(1) or is implicated in proton conduction. This is ATP synthase subunit delta from Rhodopseudomonas palustris (strain HaA2).